The chain runs to 709 residues: Alpha-1,2-mannosyltransferase MNN24 (709 aa).

At 1-9 the chain is on the cytoplasmic side; the sequence is MFSIPVSSK. A helical membrane pass occupies residues 10 to 30; sequence TVRLILVSLLLITLINILAAF. Topologically, residues 31 to 709 are extracellular; it reads QRSTLSSWFP…KNHIEFLEIS (679 aa). An N-linked (GlcNAc...) asparagine glycan is attached at Asn317.

This sequence belongs to the MNN1/MNT family.

Its subcellular location is the golgi apparatus membrane. It participates in protein modification; protein glycosylation. Functionally, alpha-1,2-mannosyltransferase required for cell wall integrity. Responsible for addition of the first alpha-1,2-linked mannose to form the branches on the mannan backbone of oligosaccharides. Addition of alpha-1,2-mannose is required for stabilization of the alpha-1,6-mannose backbone and hence regulates mannan fibril length; and is important for both immune recognition and virulence. This Candida albicans (strain SC5314 / ATCC MYA-2876) (Yeast) protein is Alpha-1,2-mannosyltransferase MNN24 (MNN24).